The chain runs to 151 residues: Large ribosomal subunit protein bL9 (151 aa).

This sequence belongs to the bacterial ribosomal protein bL9 family.

In terms of biological role, binds to the 23S rRNA. The sequence is that of Large ribosomal subunit protein bL9 from Francisella tularensis subsp. tularensis (strain FSC 198).